A 570-amino-acid chain; its full sequence is Adenine deaminase 2 (570 aa).

This sequence belongs to the metallo-dependent hydrolases superfamily. Adenine deaminase family. It depends on Mn(2+) as a cofactor.

It catalyses the reaction adenine + H2O + H(+) = hypoxanthine + NH4(+). The protein is Adenine deaminase 2 of Carboxydothermus hydrogenoformans (strain ATCC BAA-161 / DSM 6008 / Z-2901).